An 814-amino-acid polypeptide reads, in one-letter code: MPSTPLSATVEALSEDAAQARHAELSRAIERANQLYYNEDAPELTDAEYDALRQELEAIEARFPALTGTTEASAGVGAKPSEKFAKVRHAVPMLSLGNAFADEDVDEFVARVRRFLNLPAEEAVAFTAEPKIDGLSLSLRYEAGRLVTAATRGDGEVGENVTANALTVDDIPETLSGEGIPEVLEVRGEIYLSHEDFAAINARQEAAGKPLFANPRNAAAGSLRQLDPAITASRPLRFFAYAWGEVSEPFTDTQSAVLERFRGWGLPVNPRTKLCRSAEEMIAHYRAIEAERAGLGYDIDGVVYKVDDLGFQRRLGFVSRAPRWALAHKFAAQEAITELLAIDINVGRTGSLNPLARLKPVTVGGVVVSNATLHNEGYVQGVGADGEPIREGRDIRVGDTVIVVRAGDVIPKVRDVVIEKRPADAVPYVFPDTCPACGSRAVRELNPRTKKLDAIRRCTGGLICPAQGVERLKHFVSRNGLDLEGFGQTYIEVLFEAGLVKQPADLFRLEFEPLKAAIVARREALSAQRRTEGEPAPKKPTKKKGEEEDKAIKNLLASLDARRTIPLNRFLFALGIPQIGESTAKALAKRFPDMPALMAALAAATREQAGRDWLELSALPRIGPGTRDRLFETLDPLPGEAMQDLSLGARLRGRLTPSQREAVLAHYGSEAEADAALERAASQRPGDAYRLFADDGEIGPVATDSLIQFFSEPHNDAAVRALLEEVGTEPLAATTSAAAFAGKTVVFTGSLEKMTRSEAKATAERLGAKVSGSVSAKTDLVVAGPGAGSKLKDAEKHGVKVVSEDDWLAMLAEA.

NAD(+) is bound by residues 46 to 50 (DAEYD), 95 to 96 (SL), and Glu-129. Lys-131 serves as the catalytic N6-AMP-lysine intermediate. NAD(+)-binding residues include Arg-152, Glu-189, Lys-305, and Lys-329. Residues Cys-434, Cys-437, Cys-458, and Cys-464 each coordinate Zn(2+). A disordered region spans residues 526–549 (SAQRRTEGEPAPKKPTKKKGEEED). In terms of domain architecture, BRCT spans 735 to 814 (TSAAAFAGKT…DDWLAMLAEA (80 aa)).

It belongs to the NAD-dependent DNA ligase family. LigA subfamily. The cofactor is Mg(2+). It depends on Mn(2+) as a cofactor.

It catalyses the reaction NAD(+) + (deoxyribonucleotide)n-3'-hydroxyl + 5'-phospho-(deoxyribonucleotide)m = (deoxyribonucleotide)n+m + AMP + beta-nicotinamide D-nucleotide.. DNA ligase that catalyzes the formation of phosphodiester linkages between 5'-phosphoryl and 3'-hydroxyl groups in double-stranded DNA using NAD as a coenzyme and as the energy source for the reaction. It is essential for DNA replication and repair of damaged DNA. The polypeptide is DNA ligase (Methylorubrum extorquens (strain CM4 / NCIMB 13688) (Methylobacterium extorquens)).